A 622-amino-acid polypeptide reads, in one-letter code: Mitochondrial Rho GTPase 2 (622 aa).

The Cytoplasmic portion of the chain corresponds to 1 to 596 (MRRDVRILLL…ELHPTPFWLR (596 aa)). In terms of domain architecture, Miro 1 spans 2-168 (RRDVRILLLG…FYYAQKAVLH (167 aa)). The GTP site is built by glycine 16, lysine 17, threonine 18, and serine 19. Residue threonine 18 participates in Mg(2+) binding. Aspartate 57 contributes to the Mg(2+) binding site. Serine 59 provides a ligand contact to GTP. Residue lysine 96 forms a Glycyl lysine isopeptide (Lys-Gly) (interchain with G-Cter in ubiquitin) linkage. Residues asparagine 118, lysine 119, aspartate 121, alanine 149, and lysine 150 each contribute to the GTP site. Residue lysine 119 forms a Glycyl lysine isopeptide (Lys-Gly) (interchain with G-Cter in ubiquitin) linkage. A Glycyl lysine isopeptide (Lys-Gly) (interchain with G-Cter in ubiquitin) cross-link involves residue lysine 164. EF-hand domains are found at residues 184–219 (ACAQ…CFGH) and 304–339 (RGYQ…FSVA). The Ca(2+) site is built by aspartate 197, aspartate 199, aspartate 201, glutamate 208, aspartate 317, aspartate 319, aspartate 321, and glutamate 328. The 166-residue stretch at 415 to 580 (RSVLMCKVLG…FTQLATMATF (166 aa)) folds into the Miro 2 domain. Residues glycine 427, glycine 429, lysine 430, serine 431, and alanine 432 each coordinate GTP. Position 431 (serine 431) interacts with Mg(2+). Residue glutamate 475 coordinates Mg(2+). Lysine 529, aspartate 531, and cysteine 560 together coordinate GTP. Residues 597–619 (GVLVAVGTAVAAVLSFSLYRVLV) traverse the membrane as a helical; Anchor for type IV membrane protein segment. Topologically, residues 620–622 (KSR) are mitochondrial intermembrane.

The protein belongs to the mitochondrial Rho GTPase family. Homodimer. Interacts with the kinesin-binding proteins TRAK1/OIP106 and TRAK2/GRIF1, forming a link between mitochondria and the trafficking apparatus of the microtubules. Interacts with ARMCX3. Found in a complex with KIF5B, OGT, RHOT1 and TRAK1. Post-translationally, ubiquitinated by PRKN in a PINK1-dependent manner, leading to its degradation.

The protein resides in the mitochondrion outer membrane. The enzyme catalyses GTP + H2O = GDP + phosphate + H(+). The catalysed reaction is ATP + H2O = ADP + phosphate + H(+). It catalyses the reaction UTP + H2O = UDP + phosphate + H(+). In terms of biological role, atypical mitochondrial nucleoside-triphosphatase (NTPase) involved in mitochondrial trafficking. Probably involved in control of anterograde transport of mitochondria and their subcellular distribution. Can hydrolyze GTP, ATP and UTP. The polypeptide is Mitochondrial Rho GTPase 2 (Rhot2) (Rattus norvegicus (Rat)).